The chain runs to 1245 residues: MRIGKSSGWLNESVSLEYEHVSPPTRPRDTRRRPRAAGDGGLAHLHRRLAVGYAEDTPRTEARSPAPRRPLPVAPASAPPAPSLVPEPPMPVSLPAVSSPRFSAGSSAAITDPFPSLPPTPVLYAMARELEALSDATWQPAVPLPAEPPTDARRGNTVFDEASASSPVIASACPQAFASPPRAPRSARARRARTGGDAWPAPTFLSRPSSSRIGRDVFGKLVALGYSREQIRKLKQESLSEIAKYHTTLTGQGFTHADICRISRRRQSLRVVARNYPELAAALPELTRAHIVDIARQRSGDLALQALLPVATALTAAPLRLSASQIATVAQYGERPAIQALYRLRRKLTRAPLHLTPQQVVAIASNTGGKRALEAVCVQLPVLRAAPYRLSTEQVVAIASNKGGKQALEAVKAHLLDLLGAPYVLDTEQVVAIASHNGGKQALEAVKADLLDLRGAPYALSTEQVVAIASHNGGKQALEAVKADLLELRGAPYALSTEQVVAIASHNGGKQALEAVKAHLLDLRGVPYALSTEQVVAIASHNGGKQALEAVKAQLLDLRGAPYALSTAQVVAIASNGGGKQALEGIGEQLLKLRTAPYGLSTEQVVAIASHDGGKQALEAVGAQLVALRAAPYALSTEQVVAIASNKGGKQALEAVKAQLLELRGAPYALSTAQVVAIASHDGGNQALEAVGTQLVALRAAPYALSTEQVVAIASHDGGKQALEAVGAQLVALRAAPYALNTEQVVAIASSHGGKQALEAVRALFPDLRAAPYALSTAQLVAIASNPGGKQALEAVRALFRELRAAPYALSTEQVVAIASNHGGKQALEAVRALFRGLRAAPYGLSTAQVVAIASSNGGKQALEAVWALLPVLRATPYDLNTAQIVAIASHDGGKPALEAVWAKLPVLRGAPYALSTAQVVAIACISGQQALEAIEAHMPTLRQASHSLSPERVAAIACIGGRSAVEAVRQGLPVKAIRRIRREKAPVAGPPPASLGPTPQELVAVLHFFRAHQQPRQAFVDALAAFQATRPALLRLLSSVGVTEIEALGGTIPDATERWQRLLGRLGFRPATGAAAPSPDSLQGFAQSLERTLGSPGMAGQSACSPHRKRPAETAIAPRSIRRSPNNAGQPSEPWPDQLAWLQRRKRTARSHIRADSAASVPANLHLGTRAQFTPDRLRAEPGPIMQAHTSPASVSFGSHVAFEPGLPDPGTPTSADLASFEAEPFGVGPLDFHLDWLLQILET.

Disordered stretches follow at residues 1-87 (MRIG…LVPE) and 173-205 (CPQA…PTFL). The segment covering 67–87 (PRRPLPVAPASAPPAPSLVPE) has biased composition (pro residues). The Nuclear localization signal 1 signature appears at 185–191 (RSARARR). A Cryptic repeat -1 repeat occupies 286-320 (LTRAHIVDIARQRSGDLALQALLPVATALTAAPLR). Residues 321–354 (LSASQIATVAQYGERPAIQALYRLRRKLTRAPLH) form a Cryptic repeat 0 repeat. Core repeat repeat units lie at residues 355 to 389 (LTPQ…APYR), 390 to 424 (LSTE…APYV), 425 to 459 (LDTE…APYA), 460 to 494 (LSTE…APYA), 495 to 529 (LSTE…VPYA), 530 to 564 (LSTE…APYA), 565 to 599 (LSTA…APYG), 600 to 634 (LSTE…APYA), 635 to 669 (LSTE…APYA), 670 to 704 (LSTA…APYA), 705 to 739 (LSTE…APYA), 740 to 774 (LNTE…APYA), 775 to 809 (LSTA…APYA), 810 to 844 (LSTE…APYG), 845 to 879 (LSTA…TPYD), and 880 to 914 (LNTA…APYA). A Cryptic repeat +1 repeat occupies 915-948 (LSTAQVVAIACISGQQALEAIEAHMPTLRQASHS). The stretch at 949–982 (LSPERVAAIACIGGRSAVEAVRQGLPVKAIRRIR) is one Cryptic repeat +2 repeat. Short sequence motifs (nuclear localization signal) lie at residues 980–983 (RIRR), 1108–1111 (HRKR), and 1145–1148 (RRKR). The segment at 1096 to 1138 (SPGMAGQSACSPHRKRPAETAIAPRSIRRSPNNAGQPSEPWPD) is disordered. Residues 1237–1245 (DWLLQILET) form an activation domain region.

The protein belongs to the transcription activator-like effector (TALE) family. RipTAL/RTL subfamily.

The protein localises to the secreted. Its subcellular location is the host nucleus. Functionally, exported into plant cells, where it is targeted to the nucleus and probably acts as a transcription factor. Binds DNA in a sequence-specific manner. May contribute to plant pathogenicity. The protein is TAL effector protein Brg11 of Ralstonia nicotianae (strain ATCC BAA-1114 / GMI1000) (Ralstonia solanacearum).